The following is a 928-amino-acid chain: Probable outer membrane protein pmp10 (928 aa).

An N-terminal signal peptide occupies residues M1 to A25. Positions T635 to F928 constitute an Autotransporter domain.

This sequence belongs to the PMP outer membrane protein family.

It localises to the secreted. It is found in the cell wall. Its subcellular location is the cell outer membrane. This chain is Probable outer membrane protein pmp10 (pmp10), found in Chlamydia pneumoniae (Chlamydophila pneumoniae).